Reading from the N-terminus, the 160-residue chain is Probable NADH dehydrogenase [ubiquinone] 1 beta subcomplex subunit 2, mitochondrial (160 aa).

It belongs to the complex I NDUFB2 subunit family. Complex I is composed of 45 different subunits.

It localises to the mitochondrion inner membrane. In terms of biological role, accessory subunit of the mitochondrial membrane respiratory chain NADH dehydrogenase (Complex I), that is believed not to be involved in catalysis. Complex I functions in the transfer of electrons from NADH to the respiratory chain. The immediate electron acceptor for the enzyme is believed to be ubiquinone. The polypeptide is Probable NADH dehydrogenase [ubiquinone] 1 beta subcomplex subunit 2, mitochondrial (Caenorhabditis briggsae).